The primary structure comprises 104 residues: MTNRLVLSGTVCRTPLRKVSPSGIPHCQFVLEHRSVQEEAGFHRQAWCQMPVIVSGHENQAITHSITVGSSITVQGFISCYKAKNGLSKMVLHAEQIELIDSGD.

An SSB domain is found at 1–101; the sequence is MTNRLVLSGT…LHAEQIELID (101 aa).

This sequence belongs to the PriB family. In terms of assembly, homodimer. Interacts with PriA and DnaT. Component of the replication restart primosome. Primosome assembly occurs via a 'hand-off' mechanism. PriA binds to replication forks, subsequently PriB then DnaT bind; DnaT then displaces ssDNA to generate the helicase loading substrate.

In terms of biological role, involved in the restart of stalled replication forks, which reloads the replicative helicase on sites other than the origin of replication; the PriA-PriB pathway is the major replication restart pathway. During primosome assembly it facilitates complex formation between PriA and DnaT on DNA; stabilizes PriA on DNA. Stimulates the DNA unwinding activity of PriA helicase. The chain is Replication restart protein PriB from Shigella dysenteriae serotype 1 (strain Sd197).